Reading from the N-terminus, the 72-residue chain is Translation initiation factor IF-1 (72 aa).

The S1-like domain occupies 1-72 (MSKEDSFEME…SKGRITYRAR (72 aa)).

It belongs to the IF-1 family. As to quaternary structure, component of the 30S ribosomal translation pre-initiation complex which assembles on the 30S ribosome in the order IF-2 and IF-3, IF-1 and N-formylmethionyl-tRNA(fMet); mRNA recruitment can occur at any time during PIC assembly.

It is found in the cytoplasm. Functionally, one of the essential components for the initiation of protein synthesis. Stabilizes the binding of IF-2 and IF-3 on the 30S subunit to which N-formylmethionyl-tRNA(fMet) subsequently binds. Helps modulate mRNA selection, yielding the 30S pre-initiation complex (PIC). Upon addition of the 50S ribosomal subunit IF-1, IF-2 and IF-3 are released leaving the mature 70S translation initiation complex. This is Translation initiation factor IF-1 from Pseudomonas syringae pv. tomato (strain ATCC BAA-871 / DC3000).